Here is a 665-residue protein sequence, read N- to C-terminus: Zinc finger CCCH domain-containing protein 45 (665 aa).

Positions methionine 1–glycine 55 are disordered. The span at glycine 33–histidine 50 shows a compositional bias: gly residues. C3H1-type zinc fingers lie at residues serine 58–aspartate 85, lysine 86–aspartate 113, and aspartate 114–leucine 139. The tract at residues histidine 167–proline 256 is disordered. A compositionally biased stretch (polar residues) spans asparagine 169–glutamine 200. Residues glutamine 205–glutamine 238 show a composition bias toward low complexity. The segment covering serine 239–arginine 250 has biased composition (polar residues). Residues serine 260–leucine 395 form the YTH domain. Positions aspartate 432–glutamine 459 form a coiled coil. The span at asparagine 439–asparagine 454 shows a compositional bias: acidic residues. 2 disordered regions span residues asparagine 439–tryptophan 469 and glycine 561–arginine 665. Gly residues predominate over residues glycine 561 to glycine 573. Residues threonine 596 to aspartate 623 show a composition bias toward basic and acidic residues.

This chain is Zinc finger CCCH domain-containing protein 45, found in Oryza sativa subsp. japonica (Rice).